The chain runs to 432 residues: uncharacterized protein (432 aa).

3 disordered regions span residues 37–61 (DGIG…SADC), 127–151 (RDHD…DTRY), and 298–378 (SVSS…NHQC). The segment covering 312–335 (DSSTLANTQGFREDQSQQQHTPSP) has biased composition (polar residues). The segment covering 341–366 (SSLSHQFHQSIHQSHQHHQSIYQSQH) has biased composition (low complexity).

This is an uncharacterized protein from Arabidopsis thaliana (Mouse-ear cress).